We begin with the raw amino-acid sequence, 407 residues long: Tyrosine--tRNA ligase (407 aa).

An L-tyrosine-binding site is contributed by tyrosine 36. Residues 41–50 carry the 'HIGH' region motif; that stretch reads PTADSLHIGH. L-tyrosine contacts are provided by tyrosine 169 and glutamine 173. The 'KMSKS' region signature appears at 229-233; it reads KMGKT. ATP is bound at residue lysine 232. Residues 341–407 enclose the S4 RNA-binding domain; that stretch reads KGILDILVET…KKSYNRIVIE (67 aa).

This sequence belongs to the class-I aminoacyl-tRNA synthetase family. TyrS type 1 subfamily. As to quaternary structure, homodimer.

It localises to the cytoplasm. The catalysed reaction is tRNA(Tyr) + L-tyrosine + ATP = L-tyrosyl-tRNA(Tyr) + AMP + diphosphate + H(+). Its function is as follows. Catalyzes the attachment of tyrosine to tRNA(Tyr) in a two-step reaction: tyrosine is first activated by ATP to form Tyr-AMP and then transferred to the acceptor end of tRNA(Tyr). This chain is Tyrosine--tRNA ligase, found in Clostridium tetani (strain Massachusetts / E88).